A 446-amino-acid chain; its full sequence is UDP-N-acetylmuramoylalanine--D-glutamate ligase (446 aa).

115–121 (GTNGKTT) contacts ATP.

It belongs to the MurCDEF family.

It localises to the cytoplasm. It catalyses the reaction UDP-N-acetyl-alpha-D-muramoyl-L-alanine + D-glutamate + ATP = UDP-N-acetyl-alpha-D-muramoyl-L-alanyl-D-glutamate + ADP + phosphate + H(+). It functions in the pathway cell wall biogenesis; peptidoglycan biosynthesis. In terms of biological role, cell wall formation. Catalyzes the addition of glutamate to the nucleotide precursor UDP-N-acetylmuramoyl-L-alanine (UMA). The polypeptide is UDP-N-acetylmuramoylalanine--D-glutamate ligase (Pelobacter propionicus (strain DSM 2379 / NBRC 103807 / OttBd1)).